Reading from the N-terminus, the 359-residue chain is F-box/kelch-repeat protein At1g15670 (359 aa).

Positions 2–49 (ELIPDLPETVAYECLLRSSYKQFPLMASVCKLWQREISLSDFFRHRKA) constitute an F-box domain. 5 Kelch repeats span residues 119–167 (DLVV…ASDS), 170–217 (NVFV…FHAG), 219–269 (FHVI…CAAG), 271–310 (NGDLYACCRRDLMMMKDDTWYKVGNLPADVCNVSYVAIRR), and 313–358 (NLVV…CFLE).

The polypeptide is F-box/kelch-repeat protein At1g15670 (Arabidopsis thaliana (Mouse-ear cress)).